A 431-amino-acid polypeptide reads, in one-letter code: Enolase (431 aa).

A (2R)-2-phosphoglycerate-binding site is contributed by Gln163. Glu205 (proton donor) is an active-site residue. Residues Asp242, Glu288, and Asp315 each coordinate Mg(2+). Positions 340, 369, 370, and 391 each coordinate (2R)-2-phosphoglycerate. Residue Lys340 is the Proton acceptor of the active site.

It belongs to the enolase family. Requires Mg(2+) as cofactor.

Its subcellular location is the cytoplasm. The protein resides in the secreted. It is found in the cell surface. The catalysed reaction is (2R)-2-phosphoglycerate = phosphoenolpyruvate + H2O. The protein operates within carbohydrate degradation; glycolysis; pyruvate from D-glyceraldehyde 3-phosphate: step 4/5. Functionally, catalyzes the reversible conversion of 2-phosphoglycerate (2-PG) into phosphoenolpyruvate (PEP). It is essential for the degradation of carbohydrates via glycolysis. The polypeptide is Enolase (Bacillus cereus (strain ZK / E33L)).